A 482-amino-acid chain; its full sequence is UDP-N-acetylmuramate--L-alanine ligase (482 aa).

119–125 (GTHGKTT) provides a ligand contact to ATP.

The protein belongs to the MurCDEF family.

It is found in the cytoplasm. The catalysed reaction is UDP-N-acetyl-alpha-D-muramate + L-alanine + ATP = UDP-N-acetyl-alpha-D-muramoyl-L-alanine + ADP + phosphate + H(+). Its pathway is cell wall biogenesis; peptidoglycan biosynthesis. Functionally, cell wall formation. The sequence is that of UDP-N-acetylmuramate--L-alanine ligase from Cyanothece sp. (strain PCC 7425 / ATCC 29141).